Consider the following 461-residue polypeptide: Sensor histidine kinase MctS (461 aa).

Helical transmembrane passes span 7–27 (IIAL…TFIT) and 203–223 (FVIV…TCML). At histidine 259 the chain carries Phosphohistidine; by autocatalysis. The Histidine kinase domain maps to 360–450 (LYRVAQEAFN…TLTAMMPKSA (91 aa)).

Its subcellular location is the cell membrane. The catalysed reaction is ATP + protein L-histidine = ADP + protein N-phospho-L-histidine.. Functionally, member of the two-component regulatory system MctS/MctR, which activates mctP expression. This Rhizobium johnstonii (strain DSM 114642 / LMG 32736 / 3841) (Rhizobium leguminosarum bv. viciae) protein is Sensor histidine kinase MctS.